Reading from the N-terminus, the 388-residue chain is Staphopain A (388 aa).

A signal peptide spans 1-25 (MKRNFPKLIALSLIFSLSVTPIANA). The propeptide occupies 26–214 (ESNSNIKAKD…TSQFKSNNYT (189 aa)). Residues Cys-238, His-334, and Asn-355 contribute to the active site.

This sequence belongs to the peptidase C47 family. In the cytoplasm, prematurely activated/folded ScpA forms a stable non-covalent complex with ScpB. In terms of processing, cleavage leads to the activation of ScpA probably by an auto-catalytic manner.

Its subcellular location is the secreted. It carries out the reaction Broad endopeptidase action on proteins including elastin, but rather limited hydrolysis of small-molecule substrates. Assays are conveniently made with hemoglobin, casein or Z-Phe-Arg-NHMec as substrate.. Prematurely activated/folded staphopain A is inhibited by staphostatin A (ScpB), which is probably required to protect staphylococcal cytoplasmic proteins from degradation by ScpA. Cysteine protease that plays an important role in the inhibition of host innate immune response. Cleaves host elastins found in connective tissues, pulmonary surfactant protein A in the lungs, and the chemokine receptor CXCR2 on leukocytes. Proteolytic cleavage of surfactant protein A impairs bacterial phagocytosis by neutrophils while CXCR2 degradation blocks neutrophil activation and chemotaxis. Additionally, promotes vascular leakage by activating the plasma kallikerin/kinin system, resulting in hypotension. This Staphylococcus aureus (strain Mu50 / ATCC 700699) protein is Staphopain A (sspP).